Consider the following 139-residue polypeptide: Hydrogenase maturation factor HypA (139 aa).

H2 is a Ni(2+) binding site. 4 residues coordinate Zn(2+): C73, C76, C110, and C113.

Belongs to the HypA/HybF family.

Functionally, involved in the maturation of [NiFe] hydrogenases. Required for nickel insertion into the metal center of the hydrogenase. This is Hydrogenase maturation factor HypA from Pyrococcus abyssi (strain GE5 / Orsay).